The sequence spans 405 residues: uncharacterized protein (405 aa).

The next 13 membrane-spanning stretches (helical) occupy residues 19–39, 48–68, 85–105, 106–126, 129–149, 156–176, 178–198, 224–244, 252–272, 283–303, 309–329, 344–364, and 366–386; these read IVSIVMFNFASYLTIGLPLAV, MGFSAFWAGLIISLQYFATLL, IVVFGLCGCFLSGLGYLLADI, ASAWPMISLLLLGLGRVILGI, SFAGTGSTLWGVGVVGSLHIG, GIVTYGAMAMGAPLGVLCYAW, GLQGLALTVMGVALLAVLLAL, GMALALASAGFGVIATFITLF, GAAFALTLFSVAFVGTRLLFP, VAMICFGVEIIGLLLVGTAAM, IGVLLTGMGFSLVFPALGVVA, TYTVFMDMSLGVTGPLAGLVM, and WAGVPVIYLAAAGLVAMALLL.

It belongs to the major facilitator superfamily. YhhS family.

It is found in the cell inner membrane. This is an uncharacterized protein from Salmonella enteritidis PT4 (strain P125109).